Consider the following 443-residue polypeptide: Chromosome partition protein MukF (443 aa).

Positions 209–237 (LDETSGNLRELQDVLNASGDKLQSQLLRI) are leucine-zipper.

It belongs to the MukF family. Interacts, and probably forms a ternary complex, with MukE and MukB via its C-terminal region. The complex formation is stimulated by calcium or magnesium. It is required for an interaction between MukE and MukB.

It is found in the cytoplasm. The protein localises to the nucleoid. In terms of biological role, involved in chromosome condensation, segregation and cell cycle progression. May participate in facilitating chromosome segregation by condensation DNA from both sides of a centrally located replisome during cell division. Not required for mini-F plasmid partitioning. Probably acts via its interaction with MukB and MukE. Overexpression results in anucleate cells. It has a calcium binding activity. This Glaesserella parasuis serovar 5 (strain SH0165) (Haemophilus parasuis) protein is Chromosome partition protein MukF.